Reading from the N-terminus, the 133-residue chain is Large ribosomal subunit protein bL17 (133 aa).

The protein belongs to the bacterial ribosomal protein bL17 family. Part of the 50S ribosomal subunit. Contacts protein L32.

In Ehrlichia chaffeensis (strain ATCC CRL-10679 / Arkansas), this protein is Large ribosomal subunit protein bL17.